Reading from the N-terminus, the 1256-residue chain is N-acetylglucosamine-1-phosphotransferase subunits alpha/beta (1256 aa).

A helical membrane pass occupies residues 22–42 (VCFLGVVVTIVSAFQFGEVVL). 5 N-linked (GlcNAc...) asparagine glycosylation sites follow: asparagine 83, asparagine 114, asparagine 148, asparagine 179, and asparagine 250. Cystine bridges form between cysteine 438/cysteine 461, cysteine 452/cysteine 468, cysteine 505/cysteine 528, and cysteine 519/cysteine 535. 2 LNR repeats span residues 438 to 473 (CAEGCPGSWIKDGYCDKACNNSACDWDGGDCSGNSG) and 505 to 545 (CNQG…ELYK). Positions 449, 464, 467, 516, 531, and 534 each coordinate Ca(2+). 5 N-linked (GlcNAc...) asparagine glycosylation sites follow: asparagine 614, asparagine 699, asparagine 729, asparagine 829, and asparagine 1009. Residues 699–798 (NISLLPKDAQ…TFPAVSVKVN (100 aa)) form the DMAP1-binding domain. The region spanning 1005–1040 (VQPLNISQVFDEVDTDQSGVLSDREIRTLATRIHEL) is the EF-hand domain. Residues aspartate 1018, aspartate 1020, serine 1022, and glutamate 1029 each coordinate Ca(2+). N-linked (GlcNAc...) asparagine glycosylation is present at asparagine 1129. The chain crosses the membrane as a helical span at residues 1215 to 1235 (VLATLIMFTIFSFFAEQLIAL).

It belongs to the stealth family. In terms of assembly, hexamer of two alpha, two beta and two gamma (GNPTG) subunits; disulfide-linked. The alpha and/or the beta subunits of the enzyme constitute the catalytic subunits. Interacts with LYSET; facilitates proper localization of GNPTAB. In terms of processing, the alpha- and beta-subunits are generated by a proteolytic cleavage by MBTPS1 protease at the Lys-928-Asp-929 bond. As to expression, expressed in the heart, whole brain, placenta, lung, liver, skeletal muscle, kidney and pancreas.

The protein resides in the golgi apparatus membrane. The enzyme catalyses N(4)-[alpha-D-mannosyl-(1-&gt;2)-alpha-D-mannosyl-(glycan)]-L-asparaginyl-[protein] + UDP-N-acetyl-alpha-D-glucosamine = N(4)-[6-(N-acetyl-alpha-D-glucosaminyl-1-phospho)-alpha-D-mannosyl-(1-&gt;2)-alpha-D-mannosyl-(glycan)]-L-asparaginyl-[protein] + UMP + H(+). Functionally, catalyzes the formation of mannose 6-phosphate (M6P) markers on high mannose type oligosaccharides in the Golgi apparatus. M6P residues are required to bind to the M6P receptors (MPR), which mediate the vesicular transport of lysosomal enzymes to the endosomal/prelysosomal compartment. The polypeptide is N-acetylglucosamine-1-phosphotransferase subunits alpha/beta (GNPTAB) (Homo sapiens (Human)).